We begin with the raw amino-acid sequence, 339 residues long: Anthranilate phosphoribosyltransferase (339 aa).

5-phospho-alpha-D-ribose 1-diphosphate-binding positions include glycine 81, 84–85, serine 89, 91–94, 109–117, and alanine 121; these read GD, NVSS, and KHGNRALSS. Position 81 (glycine 81) interacts with anthranilate. Serine 93 lines the Mg(2+) pocket. Residue asparagine 112 participates in anthranilate binding. Arginine 167 serves as a coordination point for anthranilate. The Mg(2+) site is built by aspartate 225 and glutamate 226.

The protein belongs to the anthranilate phosphoribosyltransferase family. Homodimer. Mg(2+) is required as a cofactor.

The enzyme catalyses N-(5-phospho-beta-D-ribosyl)anthranilate + diphosphate = 5-phospho-alpha-D-ribose 1-diphosphate + anthranilate. The protein operates within amino-acid biosynthesis; L-tryptophan biosynthesis; L-tryptophan from chorismate: step 2/5. Catalyzes the transfer of the phosphoribosyl group of 5-phosphorylribose-1-pyrophosphate (PRPP) to anthranilate to yield N-(5'-phosphoribosyl)-anthranilate (PRA). The sequence is that of Anthranilate phosphoribosyltransferase from Brucella suis biovar 1 (strain 1330).